The following is an 87-amino-acid chain: Mitochondrial import inner membrane translocase subunit TIM8 (87 aa).

Positions 44-68 match the Twin CX3C motif motif; it reads CFKKCVESVNDSNLSSQEEQCLSNC. 2 cysteine pairs are disulfide-bonded: cysteine 44–cysteine 68 and cysteine 48–cysteine 64.

This sequence belongs to the small Tim family. In terms of assembly, heterohexamer; composed of 3 copies of TIM8 and 3 copies of TIM13, named soluble 70 kDa complex. Associates with the TIM22 complex, whose core is composed of TIM18, TIM22 and TIM54. Interacts with the transmembrane regions of multi-pass transmembrane proteins in transit.

The protein localises to the mitochondrion inner membrane. The protein resides in the mitochondrion intermembrane space. Functionally, mitochondrial intermembrane chaperone that participates in the import and insertion of some multi-pass transmembrane proteins into the mitochondrial inner membrane. Also required for the transfer of beta-barrel precursors from the TOM complex to the sorting and assembly machinery (SAM complex) of the outer membrane. Acts as a chaperone-like protein that protects the hydrophobic precursors from aggregation and guide them through the mitochondrial intermembrane space. The TIM8-TIM13 complex is non essential and only mediates the import of few proteins under precise conditions, while the predominant TIM9-TIM10 70 kDa complex is crucial and mediates the import of much more proteins. Strictly required for import of TIM23 in some conditions, when a low membrane potential exists in the mitochondria. This chain is Mitochondrial import inner membrane translocase subunit TIM8 (TIM8), found in Saccharomyces cerevisiae (strain ATCC 204508 / S288c) (Baker's yeast).